The following is a 441-amino-acid chain: MIGGLFVYNHKGEVLISRIYRDDVTRNAVDAFRVNVIHARQQVRSPVTNMARTSFFHVKRGNVWICAVTRQNVNAAMVFEFLKRFADTMQSYFGKLNEENVKNNFVLIYELLDEILDFGYPQNTDPGVLKTFITQQGVRTADAPVPVTKEEQSQITSQVTGQIGWRREGIKYRRNELFLDVIEYVNLLMNQQGQVLSAHVAGKVAMKSYLSGMPECKFGINDKITIEGKSKPGSDDPNKASRAAVAIDDCQFHQCVKLTKFETEHAISFIPPDGEYELMRYRTTKDIQLPFRVIPLVREVSRNKMEVKVVVKSNFKPSLLAQKLEVRIPTPPNTSGVQLICMKGKAKYKAGENAIVWKIKRMAGMKESQISAEIDLLSTGNVEKKKWNRPPVSMNFEVPFAPSGLKVRYLKVFEPKLNYSDHDVIKWVRYIGRSGLYETRC.

In terms of domain architecture, MHD spans Arg-174 to Arg-440.

Belongs to the adapter complexes medium subunit family. Adapter protein complex 2 (AP-2) is a heterotetramer composed of two large adaptins (alpha-type subunit and beta-type subunits), a medium adaptin (mu-type subunit AP50) and a small adaptin (sigma-type subunit AP17). As to expression, brain, heart, lung, liver, testis and spleen.

The protein localises to the cell membrane. It is found in the membrane. Its subcellular location is the coated pit. Component of the adapter complexes which link clathrin to receptors in coated vesicles. Clathrin-associated protein complexes are believed to interact with the cytoplasmic tails of membrane proteins, leading to their selection and concentration. AP50 is a subunit of the plasma membrane adapter. Essential wnt/egl-20 signaling protein that functions in wnt/egl-20-producing cells. Required for the AP-2 complex-mediated endocytosis of membrane proteins including wntless homolog mig-14 in egl-20-producing cells. During development, regulates the migration of HSN neurons and the left and right Q neuroblasts (QL and QR, respectively) and their descendants, possibly through hox gene and wnt/egl-20 gene target mab-5, and plays a role in establishing ALM and PLM neuronal cell polarity. Regulates AWB sensory neuron cilia membrane expansion during development, potentially via localization of tub-1 and PtdIns(4,5)P2 to the ciliary base. Required for the asymmetric divisions of V5 cells. In Caenorhabditis elegans, this protein is AP-2 complex subunit mu (dpy-23).